A 147-amino-acid polypeptide reads, in one-letter code: Hemoglobin subunit beta-1 (147 aa).

A Globin domain is found at 3 to 147 (EWTATERTHI…VVSALGRQYH (145 aa)). Heme b contacts are provided by His-64 and His-93.

Belongs to the globin family. In terms of assembly, hb 1 is a heterotetramer of two alpha-1 and two beta-1 chains. Hb 2 is a heterotetramer of two alpha-2 and two beta-1 chains. In terms of tissue distribution, red blood cells.

Involved in oxygen transport from gills to the various peripheral tissues. The chain is Hemoglobin subunit beta-1 (hbb1) from Boreogadus saida (Polar cod).